The sequence spans 334 residues: ADP-L-glycero-D-manno-heptose-6-epimerase (334 aa).

Residues 11–12 (FI), 32–33 (DN), Lys39, Lys54, 77–81 (QGACS), and Asn94 contribute to the NADP(+) site. The active-site Proton acceptor is Tyr141. Lys145 contacts NADP(+). Asn171 contacts substrate. Positions 172 and 180 each coordinate NADP(+). Catalysis depends on Lys180, which acts as the Proton acceptor. Substrate is bound by residues Arg182, His189, 203-206 (FGSN), Arg216, and Tyr295.

This sequence belongs to the NAD(P)-dependent epimerase/dehydratase family. HldD subfamily. In terms of assembly, homopentamer. NADP(+) is required as a cofactor.

It carries out the reaction ADP-D-glycero-beta-D-manno-heptose = ADP-L-glycero-beta-D-manno-heptose. It participates in nucleotide-sugar biosynthesis; ADP-L-glycero-beta-D-manno-heptose biosynthesis; ADP-L-glycero-beta-D-manno-heptose from D-glycero-beta-D-manno-heptose 7-phosphate: step 4/4. Its pathway is bacterial outer membrane biogenesis; LOS core biosynthesis. In terms of biological role, catalyzes the interconversion between ADP-D-glycero-beta-D-manno-heptose and ADP-L-glycero-beta-D-manno-heptose via an epimerization at carbon 6 of the heptose. This chain is ADP-L-glycero-D-manno-heptose-6-epimerase, found in Neisseria meningitidis serogroup A / serotype 4A (strain DSM 15465 / Z2491).